Here is a 47-residue protein sequence, read N- to C-terminus: NADH dehydrogenase [ubiquinone] iron-sulfur protein 2 (47 aa).

It belongs to the complex I 49 kDa subunit family. As to quaternary structure, complex I is composed of about 45 different subunits. This is a component of the iron-sulfur (IP) fragment of the enzyme.

Its subcellular location is the mitochondrion inner membrane. It catalyses the reaction a ubiquinone + NADH + 5 H(+)(in) = a ubiquinol + NAD(+) + 4 H(+)(out). Functionally, core subunit of the mitochondrial membrane respiratory chain NADH dehydrogenase (Complex I) that is believed to belong to the minimal assembly required for catalysis. Complex I functions in the transfer of electrons from NADH to the respiratory chain. The immediate electron acceptor for the enzyme is believed to be ubiquinone. Component of the iron-sulfur (IP) fragment of the enzyme. The protein is NADH dehydrogenase [ubiquinone] iron-sulfur protein 2 (NAD7) of Solanum tuberosum (Potato).